A 639-amino-acid chain; its full sequence is 2-oxoacid:ferredoxin oxidoreductase 1, subunit alpha (639 aa).

The YPITP motif signature appears at 266-270 (YPITP). The substrate site is built by T269 and R352.

As to quaternary structure, heterodimer composed of an alpha and a beta subunit.

It catalyses the reaction a 2-oxocarboxylate + 2 oxidized [2Fe-2S]-[ferredoxin] + CoA = an acyl-CoA + 2 reduced [2Fe-2S]-[ferredoxin] + CO2 + H(+). Functionally, catalyzes the coenzyme A-dependent oxidative decarboxylation of different 2-oxoacids such as pyruvate, 2-oxobutyrate and glyoxylate to form their CoA derivatives. The chain is 2-oxoacid:ferredoxin oxidoreductase 1, subunit alpha from Aeropyrum pernix (strain ATCC 700893 / DSM 11879 / JCM 9820 / NBRC 100138 / K1).